We begin with the raw amino-acid sequence, 260 residues long: MAGRWNLEGCTALVTGGSRGIGYGIVEELASLGASVYTCSRNQKELNDCLTQWRSKGFKVEASVCDLSSRSERQELMNTVANHFHGKLNILVNNAGIVIYKEAKDYTVEDYSLIMSINFEAAYHLSVLAHPFLKASERGNVVFISSVSGALAVPYEAVYGATKGAMDQLTRCLAFEWAKDNIRVNGVGPGVIATSLVEMTIQDPEQKENLNKLIDRCALRRMGEPKELAAMVAFLCFPAASYVTGQIIYVDGGLMANCGF.

Residue 18-41 (SRGIGYGIVEELASLGASVYTCSR) coordinates NADP(+). Ser-146 is a binding site for substrate. Tyr-159 serves as the catalytic Proton acceptor. 192-196 (IATSL) contributes to the NADP(+) binding site.

This sequence belongs to the short-chain dehydrogenases/reductases (SDR) family. Homodimer.

It catalyses the reaction pseudotropine + NADP(+) = tropinone + NADPH + H(+). The protein operates within alkaloid biosynthesis; tropane alkaloid biosynthesis. In terms of biological role, catalyzes the stereospecific reduction of tropinone to pseudotropine. This chain is Tropinone reductase 2 (TR2), found in Datura stramonium (Jimsonweed).